Consider the following 40-residue polypeptide: Photosystem II reaction center protein J (40 aa).

A helical transmembrane segment spans residues 8 to 28; that stretch reads IPLWVVATIAGLGVITVVGIF.

The protein belongs to the PsbJ family. As to quaternary structure, PSII is composed of 1 copy each of membrane proteins PsbA, PsbB, PsbC, PsbD, PsbE, PsbF, PsbH, PsbI, PsbJ, PsbK, PsbL, PsbM, PsbT, PsbX, PsbY, PsbZ, Psb30/Ycf12, peripheral proteins PsbO, CyanoQ (PsbQ), PsbU, PsbV and a large number of cofactors. It forms dimeric complexes.

It is found in the cellular thylakoid membrane. In terms of biological role, one of the components of the core complex of photosystem II (PSII). PSII is a light-driven water:plastoquinone oxidoreductase that uses light energy to abstract electrons from H(2)O, generating O(2) and a proton gradient subsequently used for ATP formation. It consists of a core antenna complex that captures photons, and an electron transfer chain that converts photonic excitation into a charge separation. The sequence is that of Photosystem II reaction center protein J from Trichormus variabilis (strain ATCC 29413 / PCC 7937) (Anabaena variabilis).